The following is a 230-amino-acid chain: Cytochrome b6-f complex iron-sulfur subunit, chloroplastic (230 aa).

The N-terminal 50 residues, 1-50 (MSSTTLSPTTPSQLCSGKSGISCPSIALLVKPTRTQMTGRGNKGMKITCQ), are a transit peptide targeting the chloroplast. A helical transmembrane segment spans residues 72-92 (LLGALSLPTAGMLVPYGSFLV). The Rieske domain occupies 115 to 213 (ATEWLKTHAP…VGVEDGKVVF (99 aa)). Residues cysteine 157, histidine 159, cysteine 175, and histidine 178 each coordinate [2Fe-2S] cluster. Residues cysteine 162 and cysteine 177 are joined by a disulfide bond.

This sequence belongs to the Rieske iron-sulfur protein family. As to quaternary structure, the 4 large subunits of the cytochrome b6-f complex are cytochrome b6, subunit IV (17 kDa polypeptide, petD), cytochrome f and the Rieske protein, while the 4 small subunits are petG, petL, petM and petN. The complex functions as a dimer. [2Fe-2S] cluster is required as a cofactor.

The protein localises to the plastid. The protein resides in the chloroplast thylakoid membrane. It carries out the reaction 2 oxidized [plastocyanin] + a plastoquinol + 2 H(+)(in) = 2 reduced [plastocyanin] + a plastoquinone + 4 H(+)(out). Functionally, component of the cytochrome b6-f complex, which mediates electron transfer between photosystem II (PSII) and photosystem I (PSI), cyclic electron flow around PSI, and state transitions. The sequence is that of Cytochrome b6-f complex iron-sulfur subunit, chloroplastic (petC) from Pisum sativum (Garden pea).